A 1040-amino-acid chain; its full sequence is Multidrug resistance protein MdtB (1040 aa).

12 consecutive transmembrane segments (helical) span residues 16–36 (FIMR…AGII), 347–367 (LMMA…NIPA), 369–389 (IIPG…MVFL), 396–416 (LTLM…IVVI), 440–460 (IGFT…PLLF), 472–492 (FAIT…TLTP), 537–557 (WLTL…WVFI), 863–883 (LGST…VLGI), 888–908 (FIHP…ALLA), 911–931 (IAGS…IGIV), 968–988 (ILMT…STGV), and 998–1018 (IGMV…TPVI).

This sequence belongs to the resistance-nodulation-cell division (RND) (TC 2.A.6) family. MdtB subfamily. Part of a tripartite efflux system composed of MdtA, MdtB and MdtC. MdtB forms a heteromultimer with MdtC.

It is found in the cell inner membrane. The MdtABC tripartite complex confers resistance against novobiocin and deoxycholate. In Escherichia coli O139:H28 (strain E24377A / ETEC), this protein is Multidrug resistance protein MdtB.